Reading from the N-terminus, the 367-residue chain is Heme A synthase (367 aa).

5 consecutive transmembrane segments (helical) span residues 25 to 45 (ALRF…LVGG), 111 to 131 (LIAR…WLTG), 139 to 159 (WPLV…WWMV), 174 to 194 (LATH…IMRG), and 210 to 230 (GFAA…ALVA). Position 274 (His-274) interacts with heme. A run of 3 helical transmembrane segments spans residues 276-296 (IGAY…LRAA), 305-325 (AVVL…TLLM), and 327-347 (VPLH…GFAI). Residue His-335 coordinates heme.

Belongs to the COX15/CtaA family. Type 2 subfamily. In terms of assembly, interacts with CtaB. It depends on heme b as a cofactor.

The protein localises to the cell membrane. It carries out the reaction Fe(II)-heme o + 2 A + H2O = Fe(II)-heme a + 2 AH2. It participates in porphyrin-containing compound metabolism; heme A biosynthesis; heme A from heme O: step 1/1. Catalyzes the conversion of heme O to heme A by two successive hydroxylations of the methyl group at C8. The first hydroxylation forms heme I, the second hydroxylation results in an unstable dihydroxymethyl group, which spontaneously dehydrates, resulting in the formyl group of heme A. The sequence is that of Heme A synthase from Rhizobium leguminosarum bv. trifolii (strain WSM2304).